The sequence spans 193 residues: dCTP deaminase (193 aa).

DCTP-binding positions include 110–115 (RSSLAR), D128, 136–138 (VLE), Y171, K178, and Q182. E138 serves as the catalytic Proton donor/acceptor. Positions 173-193 (KRKNAKYKDQQDAVASRISQD) are disordered.

This sequence belongs to the dCTP deaminase family. Homotrimer.

The enzyme catalyses dCTP + H2O + H(+) = dUTP + NH4(+). The protein operates within pyrimidine metabolism; dUMP biosynthesis; dUMP from dCTP (dUTP route): step 1/2. Functionally, catalyzes the deamination of dCTP to dUTP. The protein is dCTP deaminase of Shewanella sp. (strain ANA-3).